We begin with the raw amino-acid sequence, 490 residues long: MAAAGDRGGREAACGHDSYRSPLASRYASPEMCFLFSDKYKFRTWRQLWLWLAEAEQTLGLPITDEQIQEMKSNLDNIDFRMAAEEEKQLRHDVMAHVHTFAHCCPKAASIIHLGATSCYVGDNTDLIILRNAFDLLLPKLARVISRLADFAKEQADLPTLGFTHFQPAQLTTVGKRCCLWIQDLCMDLQNLKRVRDELRFRGVKGTTGTQASFLQLFEGDDQKVEQLDKMVTEKAGFKRAFIITGQTYTRKVDIEVLSVLASLGASVHKICTDIRLLANLKEMEEPFEKQQIGSSAMPYKRNPMRSERCCSLARHLMALVMDPLQTASVQWFERTLDDSANRRICLAEAFLTADTVLNTLQNISEGLVVYPKVIERRVQQELPFMATENIIMAMVKAGGNRQDCREKIRVLSQQAAAVVKQEGGDNDLIERIQADAYFSPIHSQLDHLLDPSSFTGRASQQVQRFLEEEVCPLLKPYESVMKVKAELRL.

Position 2 is an N-acetylalanine (Ala-2). Residues 26 to 27, 91 to 93, and 117 to 118 each bind substrate; these read RY, RHD, and TS. Lys-153 carries the post-translational modification N6-acetyllysine. The Proton donor/acceptor role is filled by His-165. Gln-247 contributes to the substrate binding site. Ser-295 serves as the catalytic Proton donor/acceptor. An N6-acetyllysine modification is found at Lys-301. Substrate-binding residues include Arg-309, Arg-335, Ser-340, and Arg-344. Lys-421 is covalently cross-linked (Glycyl lysine isopeptide (Lys-Gly) (interchain with G-Cter in SUMO1)).

The protein belongs to the lyase 1 family. Adenylosuccinate lyase subfamily. As to quaternary structure, homotetramer. Residues from neighboring subunits contribute catalytic and substrate-binding residues to each active site.

It catalyses the reaction N(6)-(1,2-dicarboxyethyl)-AMP = fumarate + AMP. The enzyme catalyses (2S)-2-[5-amino-1-(5-phospho-beta-D-ribosyl)imidazole-4-carboxamido]succinate = 5-amino-1-(5-phospho-beta-D-ribosyl)imidazole-4-carboxamide + fumarate. Its pathway is purine metabolism; AMP biosynthesis via de novo pathway; AMP from IMP: step 2/2. It participates in purine metabolism; IMP biosynthesis via de novo pathway; 5-amino-1-(5-phospho-D-ribosyl)imidazole-4-carboxamide from 5-amino-1-(5-phospho-D-ribosyl)imidazole-4-carboxylate: step 2/2. Functionally, catalyzes two non-sequential steps in de novo AMP synthesis: converts (S)-2-(5-amino-1-(5-phospho-D-ribosyl)imidazole-4-carboxamido)succinate (SAICAR) to fumarate plus 5-amino-1-(5-phospho-D-ribosyl)imidazole-4-carboxamide, and thereby also contributes to de novo IMP synthesis, and converts succinyladenosine monophosphate (SAMP) to AMP and fumarate. This Bos taurus (Bovine) protein is Adenylosuccinate lyase (ADSL).